A 491-amino-acid polypeptide reads, in one-letter code: Cobyric acid synthase (491 aa).

A GATase cobBQ-type domain is found at 250 to 437; that stretch reads QLRVVVPVLP…VHGVFDHPQA (188 aa). Cysteine 331 (nucleophile) is an active-site residue. Residue histidine 429 is part of the active site.

This sequence belongs to the CobB/CobQ family. CobQ subfamily.

It participates in cofactor biosynthesis; adenosylcobalamin biosynthesis. Its function is as follows. Catalyzes amidations at positions B, D, E, and G on adenosylcobyrinic A,C-diamide. NH(2) groups are provided by glutamine, and one molecule of ATP is hydrogenolyzed for each amidation. This chain is Cobyric acid synthase, found in Xanthomonas axonopodis pv. citri (strain 306).